A 164-amino-acid polypeptide reads, in one-letter code: MD-2-related lipid-recognition protein 3 (164 aa).

The N-terminal stretch at 1-24 (MAMSHVQPMLLLLVSLFFLPALRG) is a signal peptide.

In terms of assembly, interacts with RUB1/NEDD8. In terms of processing, neddylated. Post-translationally, ubiquitinated.

Its subcellular location is the vacuole. It is found in the endoplasmic reticulum. Its function is as follows. May be involved in herbivory-mediated responses. May play a role in herbivory-associated molecular pattern (HAMP) recognition. May function is jasmonate (JA) signaling in response to HAMP. May play a role in defense response against the pathogens Altenaria brassicicola and Pseudomonas syringae. This Arabidopsis thaliana (Mouse-ear cress) protein is MD-2-related lipid-recognition protein 3.